Reading from the N-terminus, the 351-residue chain is uncharacterized protein (351 aa).

The Zn(2+) site is built by His23, His25, Lys151, His184, His212, and Asp270. Lys151 bears the N6-carboxylysine mark.

The protein belongs to the metallo-dependent hydrolases superfamily. Phosphotriesterase family. Zn(2+) is required as a cofactor.

This is an uncharacterized protein from Mycoplasma pneumoniae (strain ATCC 29342 / M129 / Subtype 1) (Mycoplasmoides pneumoniae).